The following is an 879-amino-acid chain: Leucine--tRNA ligase (879 aa).

Positions 45-55 match the 'HIGH' region motif; that stretch reads PYPSGALHMGH. The 'KMSKS' region motif lies at 637 to 641; that stretch reads KMSKS. K640 is an ATP binding site.

It belongs to the class-I aminoacyl-tRNA synthetase family.

The protein resides in the cytoplasm. It carries out the reaction tRNA(Leu) + L-leucine + ATP = L-leucyl-tRNA(Leu) + AMP + diphosphate. The chain is Leucine--tRNA ligase from Xylella fastidiosa (strain M12).